The primary structure comprises 228 residues: Ephrin-A5 (228 aa).

The first 20 residues, 1–20 (MLHVEMLTLLFLVLWMCVFS), serve as a signal peptide directing secretion. In terms of domain architecture, Ephrin RBD spans 29 to 162 (ADRYAVYWNS…KLKVFVRPTN (134 aa)). N37 carries an N-linked (GlcNAc...) asparagine glycan. Cystine bridges form between C62/C102 and C90/C151. N162 is a glycosylation site (N-linked (GlcNAc...) asparagine; atypical). Positions 186-205 (EPADDTVHESAEPSRGENAA) are disordered. The segment covering 190 to 200 (DTVHESAEPSR) has biased composition (basic and acidic residues). The GPI-anchor amidated asparagine moiety is linked to residue N203. A propeptide spans 204-228 (AAQTPRIPSRLLAILLFLLAMLLTL) (removed in mature form).

Belongs to the ephrin family. Binds to the receptor tyrosine kinases EPHA2, EPHA3 and EPHB1. Forms a ternary EFNA5-EPHA3-ADAM10 complex mediating EFNA5 extracellular domain shedding by ADAM10 which regulates the EFNA5-EPHA3 complex internalization and function. Binds to EPHB2. Interacts with EPHA8; activates EPHA8. Expressed in myogenic progenitor cells.

The protein localises to the cell membrane. It is found in the membrane. Its subcellular location is the caveola. Functionally, cell surface GPI-bound ligand for Eph receptors, a family of receptor tyrosine kinases which are crucial for migration, repulsion and adhesion during neuronal, vascular and epithelial development. Binds promiscuously Eph receptors residing on adjacent cells, leading to contact-dependent bidirectional signaling into neighboring cells. The signaling pathway downstream of the receptor is referred to as forward signaling while the signaling pathway downstream of the ephrin ligand is referred to as reverse signaling. Induces compartmentalized signaling within a caveolae-like membrane microdomain when bound to the extracellular domain of its cognate receptor. This signaling event requires the activity of the Fyn tyrosine kinase. Activates the EPHA3 receptor to regulate cell-cell adhesion and cytoskeletal organization. With the receptor EPHA2 may regulate lens fiber cells shape and interactions and be important for lens transparency maintenance. May function actively to stimulate axon fasciculation. The interaction of EFNA5 with EPHA5 also mediates communication between pancreatic islet cells to regulate glucose-stimulated insulin secretion. Cognate/functional ligand for EPHA7, their interaction regulates brain development modulating cell-cell adhesion and repulsion. This is Ephrin-A5 (Efna5) from Mus musculus (Mouse).